We begin with the raw amino-acid sequence, 147 residues long: SsrA-binding protein (147 aa).

Residues Lys124–Ser147 are disordered. Over residues Lys128–Ser147 the composition is skewed to basic and acidic residues.

The protein belongs to the SmpB family.

It is found in the cytoplasm. Required for rescue of stalled ribosomes mediated by trans-translation. Binds to transfer-messenger RNA (tmRNA), required for stable association of tmRNA with ribosomes. tmRNA and SmpB together mimic tRNA shape, replacing the anticodon stem-loop with SmpB. tmRNA is encoded by the ssrA gene; the 2 termini fold to resemble tRNA(Ala) and it encodes a 'tag peptide', a short internal open reading frame. During trans-translation Ala-aminoacylated tmRNA acts like a tRNA, entering the A-site of stalled ribosomes, displacing the stalled mRNA. The ribosome then switches to translate the ORF on the tmRNA; the nascent peptide is terminated with the 'tag peptide' encoded by the tmRNA and targeted for degradation. The ribosome is freed to recommence translation, which seems to be the essential function of trans-translation. The chain is SsrA-binding protein from Neorickettsia sennetsu (strain ATCC VR-367 / Miyayama) (Ehrlichia sennetsu).